A 200-amino-acid polypeptide reads, in one-letter code: Large ribosomal subunit protein bL25 (200 aa).

2 disordered regions span residues 1-20 (MTIE…ASRR) and 179-200 (PVVA…GEAA).

The protein belongs to the bacterial ribosomal protein bL25 family. CTC subfamily. As to quaternary structure, part of the 50S ribosomal subunit; part of the 5S rRNA/L5/L18/L25 subcomplex. Contacts the 5S rRNA. Binds to the 5S rRNA independently of L5 and L18.

Its function is as follows. This is one of the proteins that binds to the 5S RNA in the ribosome where it forms part of the central protuberance. In Azoarcus sp. (strain BH72), this protein is Large ribosomal subunit protein bL25.